The following is a 344-amino-acid chain: Arginine N-succinyltransferase (344 aa).

Succinyl-CoA is bound at residue Leu-125. The Proton donor role is filled by His-229.

The protein belongs to the arginine N-succinyltransferase family.

The catalysed reaction is succinyl-CoA + L-arginine = N(2)-succinyl-L-arginine + CoA + H(+). It functions in the pathway amino-acid degradation; L-arginine degradation via AST pathway; L-glutamate and succinate from L-arginine: step 1/5. Catalyzes the transfer of succinyl-CoA to arginine to produce N(2)-succinylarginine. The polypeptide is Arginine N-succinyltransferase (Escherichia coli (strain UTI89 / UPEC)).